Here is a 427-residue protein sequence, read N- to C-terminus: Trigger factor (427 aa).

Residues 163–248 (GDTVVIDFVG…IHEVKAKEVP (86 aa)) enclose the PPIase FKBP-type domain.

The protein belongs to the FKBP-type PPIase family. Tig subfamily.

It localises to the cytoplasm. The catalysed reaction is [protein]-peptidylproline (omega=180) = [protein]-peptidylproline (omega=0). Involved in protein export. Acts as a chaperone by maintaining the newly synthesized protein in an open conformation. Functions as a peptidyl-prolyl cis-trans isomerase. The protein is Trigger factor of Streptococcus pneumoniae (strain Hungary19A-6).